The primary structure comprises 509 residues: Maturase K (509 aa).

It belongs to the intron maturase 2 family. MatK subfamily.

The protein localises to the plastid. The protein resides in the chloroplast. In terms of biological role, usually encoded in the trnK tRNA gene intron. Probably assists in splicing its own and other chloroplast group II introns. This chain is Maturase K, found in Solanum lycopersicum (Tomato).